Consider the following 331-residue polypeptide: Ferrochelatase (331 aa).

Fe cation-binding residues include His187 and Glu286.

Belongs to the ferrochelatase family.

It localises to the cytoplasm. It carries out the reaction heme b + 2 H(+) = protoporphyrin IX + Fe(2+). It functions in the pathway porphyrin-containing compound metabolism; protoheme biosynthesis; protoheme from protoporphyrin-IX: step 1/1. Functionally, catalyzes the ferrous insertion into protoporphyrin IX. The sequence is that of Ferrochelatase from Legionella pneumophila (strain Corby).